Reading from the N-terminus, the 546-residue chain is Glucose-6-phosphate isomerase (546 aa).

Glu355 functions as the Proton donor in the catalytic mechanism. Catalysis depends on residues His386 and Lys510.

Belongs to the GPI family.

It is found in the cytoplasm. The enzyme catalyses alpha-D-glucose 6-phosphate = beta-D-fructose 6-phosphate. Its pathway is carbohydrate biosynthesis; gluconeogenesis. It functions in the pathway carbohydrate degradation; glycolysis; D-glyceraldehyde 3-phosphate and glycerone phosphate from D-glucose: step 2/4. In terms of biological role, catalyzes the reversible isomerization of glucose-6-phosphate to fructose-6-phosphate. This Buchnera aphidicola subsp. Cinara cedri (strain Cc) protein is Glucose-6-phosphate isomerase.